The following is a 323-amino-acid chain: tRNA dimethylallyltransferase (323 aa).

Position 18–25 (18–25 (GPTASGKS)) interacts with ATP. Residue 20–25 (TASGKS) participates in substrate binding. 3 interaction with substrate tRNA regions span residues 43 to 46 (DSAQ), 167 to 171 (QRIQR), and 249 to 254 (RCVGYR).

This sequence belongs to the IPP transferase family. As to quaternary structure, monomer. It depends on Mg(2+) as a cofactor.

It carries out the reaction adenosine(37) in tRNA + dimethylallyl diphosphate = N(6)-dimethylallyladenosine(37) in tRNA + diphosphate. In terms of biological role, catalyzes the transfer of a dimethylallyl group onto the adenine at position 37 in tRNAs that read codons beginning with uridine, leading to the formation of N6-(dimethylallyl)adenosine (i(6)A). The protein is tRNA dimethylallyltransferase of Nitrosospira multiformis (strain ATCC 25196 / NCIMB 11849 / C 71).